The sequence spans 455 residues: Kynurenine--oxoglutarate transaminase 3 (455 aa).

Gly-72 provides a ligand contact to substrate. An N6-acetyllysine; alternate modification is found at Lys-117. The residue at position 117 (Lys-117) is an N6-succinyllysine; alternate. Asn-219 lines the substrate pocket. Residue Lys-281 is modified to N6-(pyridoxal phosphate)lysine. Arg-430 serves as a coordination point for substrate.

The protein belongs to the class-I pyridoxal-phosphate-dependent aminotransferase family. Homodimer. It depends on pyridoxal 5'-phosphate as a cofactor. In terms of tissue distribution, widely expressed, with higher expression levels in liver, kidney, heart and neuroendocrine tissues.

The enzyme catalyses L-kynurenine + 2-oxoglutarate = kynurenate + L-glutamate + H2O. It carries out the reaction L-kynurenine + glyoxylate = kynurenate + glycine + H2O. It catalyses the reaction 3-hydroxy-L-kynurenine + glyoxylate = xanthurenate + glycine + H2O. The catalysed reaction is an S-substituted L-cysteine + H2O = a thiol + pyruvate + NH4(+). It participates in amino-acid degradation; L-kynurenine degradation; kynurenate from L-kynurenine: step 1/2. Its activity is regulated as follows. Kynurenine transamination is competitively inhibited by cysteine, glutamine, histidine, methionine, leucine, or phenylalanine. In terms of biological role, catalyzes the irreversible transamination of the L-tryptophan metabolite L-kynurenine to form kynurenic acid (KA), an intermediate in the tryptophan catabolic pathway which is also a broad spectrum antagonist of the three ionotropic excitatory amino acid receptors among others. May catalyze the beta-elimination of S-conjugates and Se-conjugates of L-(seleno)cysteine, resulting in the cleavage of the C-S or C-Se bond. Has transaminase activity towards L-kynurenine, tryptophan, phenylalanine, serine, cysteine, methionine, histidine, glutamine and asparagine with glyoxylate as an amino group acceptor (in vitro). Has lower activity with 2-oxoglutarate as amino group acceptor (in vitro). The sequence is that of Kynurenine--oxoglutarate transaminase 3 (Kyat3) from Mus musculus (Mouse).